The following is a 219-amino-acid chain: 7-cyano-7-deazaguanine synthase (219 aa).

10 to 20 is a binding site for ATP; it reads FSGGQDSTTCL. Positions 188, 197, 200, and 203 each coordinate Zn(2+).

The protein belongs to the QueC family. Homodimer. The cofactor is Zn(2+).

The enzyme catalyses 7-carboxy-7-deazaguanine + NH4(+) + ATP = 7-cyano-7-deazaguanine + ADP + phosphate + H2O + H(+). Its pathway is purine metabolism; 7-cyano-7-deazaguanine biosynthesis. Catalyzes the ATP-dependent conversion of 7-carboxy-7-deazaguanine (CDG) to 7-cyano-7-deazaguanine (preQ(0)). This is 7-cyano-7-deazaguanine synthase from Clostridium botulinum (strain ATCC 19397 / Type A).